We begin with the raw amino-acid sequence, 25 residues long: Pregnancy-associated glycoprotein 74 (25 aa).

N-linked (GlcNAc...) asparagine glycosylation is found at Asn-4 and Asn-21.

It belongs to the peptidase A1 family. In terms of processing, N-glycosylated. Placental cotyledons.

The protein resides in the secreted. Its subcellular location is the extracellular space. The polypeptide is Pregnancy-associated glycoprotein 74 (Bison bison (American bison)).